Consider the following 163-residue polypeptide: Nucleotide-binding protein ROP_16630 (163 aa).

It belongs to the YajQ family.

Its function is as follows. Nucleotide-binding protein. The protein is Nucleotide-binding protein ROP_16630 of Rhodococcus opacus (strain B4).